Here is a 149-residue protein sequence, read N- to C-terminus: MNILVLNGINLNMFGKRDPKQYGTITLAQIDEQLDALGAELGATVQHFQSNHEGEMAERIHQAHVDNVDAVLINAGAWTHYSYGIRDALAILKCPIVEVHMSNIHAREPFRHHSVIAEIARGQIAGFGVDSYLMGLRAAVNLVNAAKAG.

The Proton acceptor role is filled by Tyr-22. Positions 74, 80, and 87 each coordinate substrate. His-100 acts as the Proton donor in catalysis. Substrate contacts are provided by residues 101–102 (MS) and Arg-111.

Belongs to the type-II 3-dehydroquinase family. In terms of assembly, homododecamer.

It carries out the reaction 3-dehydroquinate = 3-dehydroshikimate + H2O. The protein operates within metabolic intermediate biosynthesis; chorismate biosynthesis; chorismate from D-erythrose 4-phosphate and phosphoenolpyruvate: step 3/7. Its function is as follows. Catalyzes a trans-dehydration via an enolate intermediate. The polypeptide is 3-dehydroquinate dehydratase (Leptothrix cholodnii (strain ATCC 51168 / LMG 8142 / SP-6) (Leptothrix discophora (strain SP-6))).